The following is a 62-amino-acid chain: Photosystem II reaction center protein Z (62 aa).

Transmembrane regions (helical) follow at residues 8–28 (AVFA…VVFA) and 41–61 (FSGT…NSLI).

This sequence belongs to the PsbZ family. In terms of assembly, PSII is composed of 1 copy each of membrane proteins PsbA, PsbB, PsbC, PsbD, PsbE, PsbF, PsbH, PsbI, PsbJ, PsbK, PsbL, PsbM, PsbT, PsbY, PsbZ, Psb30/Ycf12, at least 3 peripheral proteins of the oxygen-evolving complex and a large number of cofactors. It forms dimeric complexes.

It localises to the plastid. The protein localises to the chloroplast thylakoid membrane. May control the interaction of photosystem II (PSII) cores with the light-harvesting antenna, regulates electron flow through the 2 photosystem reaction centers. PSII is a light-driven water plastoquinone oxidoreductase, using light energy to abstract electrons from H(2)O, generating a proton gradient subsequently used for ATP formation. This Jasminum nudiflorum (Winter jasmine) protein is Photosystem II reaction center protein Z.